The following is a 341-amino-acid chain: Casein kinase I isoform alpha (341 aa).

In terms of domain architecture, Protein kinase spans 16–284 (YKLIRKIGSG…YLRQLFRILF (269 aa)). Residues 22 to 30 (IGSGSFGDI) and lysine 45 each bind ATP. Aspartate 135 serves as the catalytic Proton acceptor. The segment covering 306-320 (QSQSSGVPGTNTTTQ) has biased composition (polar residues). Positions 306-341 (QSQSSGVPGTNTTTQGATVPSAGVPAGVAPGGTTPQ) are disordered. Over residues 321–341 (GATVPSAGVPAGVAPGGTTPQ) the composition is skewed to low complexity.

The protein belongs to the protein kinase superfamily. CK1 Ser/Thr protein kinase family. Casein kinase I subfamily.

The catalysed reaction is L-seryl-[protein] + ATP = O-phospho-L-seryl-[protein] + ADP + H(+). It catalyses the reaction L-threonyl-[protein] + ATP = O-phospho-L-threonyl-[protein] + ADP + H(+). This is Casein kinase I isoform alpha (kin-19) from Caenorhabditis elegans.